A 249-amino-acid chain; its full sequence is MTILFLTMVISYFGCMKAAPMKEVNVHGQGNLAYPGVRTHGTLESVNGPRAGSRGLTTTSLADTFEHVIEELLDEDQKVRPNEENHKDADLYTSRVMLSSQVPLEPPLLFLLEEYKNYLDAANMSMRVRRHSDPARRGELSVCDSISEWVTAADKKTAVDMSGGTVTVLEKVPVSKGQLKQYFYETKCNPMGYTKEGCRGIDKRHWNSQCRTTQSYVRALTMDSKKRIGWRFIRIDTSCVCTLTIKRGR.

Positions 1–18 are cleaved as a signal peptide; the sequence is MTILFLTMVISYFGCMKA. The propeptide occupies 19–130; it reads APMKEVNVHG…AANMSMRVRR (112 aa). A glycan (N-linked (GlcNAc...) asparagine) is linked at Asn123. 3 disulfide bridges follow: Cys143/Cys210, Cys188/Cys239, and Cys198/Cys241.

It belongs to the NGF-beta family. Monomers and homodimers. Binds to NTRK2/TRKB. Can form heterodimers with other neurotrophin family members, such as NTF3 and NTF4 (in vitro), but the physiological relevance of this is not clear. BDNF precursor form: interacts with the heterodimer formed by NGFR and SORCS2. Mature BDNF has much lower affinity for the heterodimer formed by NGFR and SORCS2. Post-translationally, N-glycosylated and glycosulfated, contrary to mature BDNF. In terms of processing, mature BDNF is produced by proteolytic removal of the propeptide, catalyzed by a FURIN family member. In addition, the precursor form is proteolytically cleaved within the propeptide, but this is not an obligatory intermediate for the production of mature BDNF. Can be converted into mature BDNF by plasmin (PLG). In terms of tissue distribution, expressed in the dorsal root ganglion and the spinal cord (at protein level). Detected in brain, especially in brain cortex, hippocampus, midbrain and cerebellum.

The protein resides in the secreted. Important signaling molecule that activates signaling cascades downstream of NTRK2. During development, promotes the survival and differentiation of selected neuronal populations of the peripheral and central nervous systems. Participates in axonal growth, pathfinding and in the modulation of dendritic growth and morphology. Major regulator of synaptic transmission and plasticity at adult synapses in many regions of the CNS. The versatility of BDNF is emphasized by its contribution to a range of adaptive neuronal responses including long-term potentiation (LTP), long-term depression (LTD), certain forms of short-term synaptic plasticity, as well as homeostatic regulation of intrinsic neuronal excitability. Its function is as follows. Important signaling molecule that activates signaling cascades downstream of NTRK2. Activates signaling cascades via the heterodimeric receptor formed by NGFR and SORCS2. Signaling via NGFR and SORCS2 plays a role in synaptic plasticity and long-term depression (LTD). Binding to NGFR and SORCS2 promotes neuronal apoptosis. Promotes neuronal growth cone collapse. The sequence is that of Neurotrophic factor BDNF precursor form (Bdnf) from Mus musculus (Mouse).